Consider the following 254-residue polypeptide: 3-deoxy-manno-octulosonate cytidylyltransferase (254 aa).

Belongs to the KdsB family.

Its subcellular location is the cytoplasm. It carries out the reaction 3-deoxy-alpha-D-manno-oct-2-ulosonate + CTP = CMP-3-deoxy-beta-D-manno-octulosonate + diphosphate. Its pathway is nucleotide-sugar biosynthesis; CMP-3-deoxy-D-manno-octulosonate biosynthesis; CMP-3-deoxy-D-manno-octulosonate from 3-deoxy-D-manno-octulosonate and CTP: step 1/1. It participates in bacterial outer membrane biogenesis; lipopolysaccharide biosynthesis. In terms of biological role, activates KDO (a required 8-carbon sugar) for incorporation into bacterial lipopolysaccharide in Gram-negative bacteria. The sequence is that of 3-deoxy-manno-octulosonate cytidylyltransferase from Pseudomonas aeruginosa (strain UCBPP-PA14).